Consider the following 472-residue polypeptide: Succinate-semialdehyde dehydrogenase [NADP(+)] (472 aa).

Residues Trp134 to Asn135, Lys158 to Ser161, and Gly210 to Ser211 contribute to the NADP(+) site. Glu232 (proton acceptor) is an active-site residue. Residue Leu233 participates in NADP(+) binding. The active-site Nucleophile is the Cys266. Glu363 lines the NADP(+) pocket.

It belongs to the aldehyde dehydrogenase family.

The enzyme catalyses succinate semialdehyde + NADP(+) + H2O = succinate + NADPH + 2 H(+). In terms of biological role, catalyzes the NADP(+)-dependent oxidation of succinate semialdehyde to succinate. It is believed to be the main source of succinate semialdehyde dehydrogenase activity in Mycobacterium. This chain is Succinate-semialdehyde dehydrogenase [NADP(+)] (gabD1), found in Mycolicibacterium paratuberculosis (strain ATCC BAA-968 / K-10) (Mycobacterium paratuberculosis).